A 109-amino-acid chain; its full sequence is uncharacterized protein (109 aa).

The protein to A.fulgidus AF1885.

This is an uncharacterized protein from Methanocaldococcus jannaschii (strain ATCC 43067 / DSM 2661 / JAL-1 / JCM 10045 / NBRC 100440) (Methanococcus jannaschii).